The sequence spans 184 residues: dCTP deaminase (184 aa).

DCTP is bound at residue Lys-107–Arg-112. The Proton donor/acceptor role is filled by Glu-133. Residues Gln-152, Tyr-166, and Gln-176 each contribute to the dCTP site.

Belongs to the dCTP deaminase family. As to quaternary structure, homotrimer.

It catalyses the reaction dCTP + H2O + H(+) = dUTP + NH4(+). The protein operates within pyrimidine metabolism; dUMP biosynthesis; dUMP from dCTP (dUTP route): step 1/2. Catalyzes the deamination of dCTP to dUTP. The sequence is that of dCTP deaminase from Granulibacter bethesdensis (strain ATCC BAA-1260 / CGDNIH1).